A 408-amino-acid chain; its full sequence is Protein SLX4IP (408 aa).

Residues K61 and K79 each participate in a glycyl lysine isopeptide (Lys-Gly) (interchain with G-Cter in SUMO2) cross-link. S130 is subject to Phosphoserine. Glycyl lysine isopeptide (Lys-Gly) (interchain with G-Cter in SUMO2) cross-links involve residues K167 and K176. Positions T173–I226 are disordered. Residues G208–M219 show a composition bias toward polar residues. S213 carries the post-translational modification Phosphoserine. Residues K239 and K242 each participate in a glycyl lysine isopeptide (Lys-Gly) (interchain with G-Cter in SUMO2) cross-link. Residues V243–Q255 show a composition bias toward polar residues. The disordered stretch occupies residues V243–L313. Glycyl lysine isopeptide (Lys-Gly) (interchain with G-Cter in SUMO2) cross-links involve residues K256, K291, K347, K356, and K372. The tract at residues L365–H408 is disordered. Residues N374–P397 are compositionally biased toward polar residues. The residue at position 392 (T392) is a Phosphothreonine. Positions T398–H408 are enriched in basic residues. Residue K399 forms a Glycyl lysine isopeptide (Lys-Gly) (interchain with G-Cter in SUMO2) linkage.

Belongs to the SLX4IP family. Interacts with SLX4/BTBD12; subunit of different structure-specific endonucleases.

This Homo sapiens (Human) protein is Protein SLX4IP (SLX4IP).